We begin with the raw amino-acid sequence, 261 residues long: Kallikrein 1-related peptidase b5 (261 aa).

The first 18 residues, M1–A18, serve as a signal peptide directing secretion. A propeptide spans P19–R24 (activation peptide). Positions I25–A258 constitute a Peptidase S1 domain. 5 disulfides stabilise this stretch: C31-C173, C50-C66, C152-C219, C184-C198, and C209-C234. H65 (charge relay system) is an active-site residue. N102 carries an N-linked (GlcNAc...) asparagine glycan. Catalysis depends on D120, which acts as the Charge relay system. The active-site Charge relay system is the S213.

This sequence belongs to the peptidase S1 family. Kallikrein subfamily.

The catalysed reaction is Preferential cleavage of Arg-|-Xaa bonds in small molecule substrates. Highly selective action to release kallidin (lysyl-bradykinin) from kininogen involves hydrolysis of Met-|-Xaa or Leu-|-Xaa.. Glandular kallikreins cleave Met-Lys and Arg-Ser bonds in kininogen to release Lys-bradykinin. This chain is Kallikrein 1-related peptidase b5 (Klk1b5), found in Mus musculus (Mouse).